A 274-amino-acid chain; its full sequence is Diaminopimelate epimerase (274 aa).

The substrate site is built by Asn-11, Gln-44, and Asn-64. Cys-73 (proton donor) is an active-site residue. Substrate-binding positions include 74–75 (GN), Asn-157, Asn-190, and 208–209 (ER). Cys-217 functions as the Proton acceptor in the catalytic mechanism. 218 to 219 (GS) is a binding site for substrate.

The protein belongs to the diaminopimelate epimerase family. In terms of assembly, homodimer.

The protein resides in the cytoplasm. It catalyses the reaction (2S,6S)-2,6-diaminopimelate = meso-2,6-diaminopimelate. It functions in the pathway amino-acid biosynthesis; L-lysine biosynthesis via DAP pathway; DL-2,6-diaminopimelate from LL-2,6-diaminopimelate: step 1/1. Functionally, catalyzes the stereoinversion of LL-2,6-diaminopimelate (L,L-DAP) to meso-diaminopimelate (meso-DAP), a precursor of L-lysine and an essential component of the bacterial peptidoglycan. The chain is Diaminopimelate epimerase from Shigella flexneri serotype 5b (strain 8401).